A 232-amino-acid chain; its full sequence is Lipoprotein-releasing system ATP-binding protein LolD (232 aa).

The 221-residue stretch at 11–231 (VYLHDIRRQY…SLENGHVVEL (221 aa)) folds into the ABC transporter domain. 47 to 54 (APSGSGKS) contributes to the ATP binding site.

This sequence belongs to the ABC transporter superfamily. Lipoprotein translocase (TC 3.A.1.125) family. As to quaternary structure, the complex is composed of two ATP-binding proteins (LolD) and two transmembrane proteins (LolC and LolE).

The protein localises to the cell inner membrane. Its function is as follows. Part of the ABC transporter complex LolCDE involved in the translocation of mature outer membrane-directed lipoproteins, from the inner membrane to the periplasmic chaperone, LolA. Responsible for the formation of the LolA-lipoprotein complex in an ATP-dependent manner. This Nitrobacter hamburgensis (strain DSM 10229 / NCIMB 13809 / X14) protein is Lipoprotein-releasing system ATP-binding protein LolD.